The primary structure comprises 161 residues: Ethylene-responsive transcription factor ERF070 (161 aa).

Residues 1–35 (MKRIIRISFTDAEATDSSSDEDTEERGGASQTRRR) are disordered. The segment at residues 78–140 (KYRGVRQRPW…IGPHAPTNFG (63 aa)) is a DNA-binding region (AP2/ERF).

The protein belongs to the AP2/ERF transcription factor family. ERF subfamily.

The protein resides in the nucleus. Its function is as follows. Probably acts as a transcriptional activator. Binds to the GCC-box pathogenesis-related promoter element. May be involved in the regulation of gene expression by stress factors and by components of stress signal transduction pathways. The sequence is that of Ethylene-responsive transcription factor ERF070 (ERF070) from Arabidopsis thaliana (Mouse-ear cress).